A 726-amino-acid chain; its full sequence is Catalase-peroxidase (726 aa).

Positions 96–224 (WHSAGTYRIA…LAAVMMGLIY (129 aa)) form a cross-link, tryptophyl-tyrosyl-methioninium (Trp-Tyr) (with M-250). Residue His97 is the Proton acceptor of the active site. The segment at residues 224–250 (YVNPEGVDGKPDPLKTAHDMRVTFARM) is a cross-link (tryptophyl-tyrosyl-methioninium (Tyr-Met) (with W-96)). His265 lines the heme b pocket.

The protein belongs to the peroxidase family. Peroxidase/catalase subfamily. Homodimer or homotetramer. Heme b is required as a cofactor. Formation of the three residue Trp-Tyr-Met cross-link is important for the catalase, but not the peroxidase activity of the enzyme.

The enzyme catalyses H2O2 + AH2 = A + 2 H2O. It carries out the reaction 2 H2O2 = O2 + 2 H2O. Functionally, bifunctional enzyme with both catalase and broad-spectrum peroxidase activity. This chain is Catalase-peroxidase, found in Vibrio campbellii (strain ATCC BAA-1116).